The sequence spans 2460 residues: MVVPNEPIAVIGTGCRFPGGASSPSKLWNLLHHPYDLTQKVPSSRFNIKAFYHPNGEHHGTTNATKSYFLNEDPTTFDAPFFNINPREAEALDPQQRLLLETVYEALEAAGLSIEEMQGTSTAVYVGLMCADYFDVLMRDIEDIPQYLATGTARSIMSNRISYFFDWKGPSMTIDTACSSSLVAVHNAISTLRSGQSRTAIAAGANLIFGPEMYIGESNLHMLSPTGRSQMWDSRADGYARGEGTAAIVLKTLKNALEDGDDIEYIIRETGVNSDGKSKGITMPLAASQADLIRQTYARAGLDCTKPSERCQYFEAHGTGTPAGDPVEAEAISSAFFPQRSDILNSEPLHVGSIKTVIGHLEGAAGLAGIIKAGLALKEKTIPPNLHFQSLNSAIEPFYGNLNVPTAPLPWPAVEGPLRASVNSFGFGGTNAHAILESYEVCTPTPSLESTALIPFTISAISEDCLIQNITNFSDYIEEHEGVNLIDLGYSLLGRSNFPTKATFVASNTEDLLDQLEKVIIAKEENPNLAIGIRSTNVNDKSSRKILGVFTGQGAQWPAMGKMLIANIPSFSQTIDSLEKSLRELPDAPKWSLKDEIVASVGKSSIEKAEFSQPLCTALQIALVDLLKLIGVTFSAVVGHSSGEIGAAYAAGRLTAGDAIRIAYYRGLHAHLAKGKGGEEGSMMAAGLSFDEALEFCAGEEYQGKISIAASNAPKTVTLSGNKDAIEKAKSTLDDRGVFARVLKVDTAYHSDHMLPCSEPYTRSLAACKISPKPSLLDCTWISSVHLKNMSSESSELETKYWVDNLVSPVRFFEAVSIAAKEFGSFDAAVEVGPHPALKGPVAQTFKHAVNAVVPYTGVLSRGDNDSIAFANALGFLLNYINGKRISFKKYLDAISGGVVTTPKLLKGLPTYSWDHSRTFWFESRISRNYRNRVDPPHELLGVRCADDTDMEYRWRNIFKLDELPWVSGHKFQRQTLVPAAFYCSMALESSKVLANGKPIRLVELHQVDIERAINLEENNAAVEVMFALKPRSSSASGSDEIVCADFWCTAAPSGKPMSMIFSGRIKMTLGTPSPDAMSIRSPVRPVLGPLNVDRFYDSLANVGLEFTGIFRGIEKGQRRMHISSLEGRRCLSDTGLLVHPAFLDMTLHATLAAFASPGDERFWTPYLPRRIAKMSFNIALCEAAFEKETALAGMDGYITEVTPTTANDAATYVGDVDVFDPLTNEIEIQIEGLQMQSFTAARPSQDRQLYLETLWAADISGGIISEVDIEDDDPKALHLIDLGERLSYAYMRHLMSEIKPENIPDHHRPLFNWINHVTDLVSKGTHPSIKPEWNNDDLQELITMASIYPECVDLELMQAVGNNLPDVVRGTTTMLEHMLPNGLLDRLYTEGIGMATSNKFVTAAMKKIGHRYPKMRVLEIGAGTGGATKGIFTGIGDAFAHYTFTDISTGFFMKAREVFSDYANRMTFSLLNCEKDPLEQGYEAHSFDVIVASNVLHATEFLEKTMRNVRTLLKPGGYLCLLECTGHLERTGFLMAGLPGWWLGGADGRPYRPTISPPEWDSVLKKTGFSGVDAIVNDFKDKSRYTVSVILSQALDDDVQKLREPLQYHPESTGKDLIVIGGSSIATQLLVETIKQDIPSWETRKTIVLATWEEASKLTIPFGTTILSVADLDEPIFKSMNAERLKGIQTVINSAESVLWVTTGCKADEPYANMAIGLGRSIISEMPHLNLQFLDVDLKGNAAKVIGETLVRLEVATGLLDSRKENLLWSIEPEMIYENGQLYLPRVKPIKKLNDVLNSTRRVITEEVLLASKKVTITPPTVGNRFNLEVQEVVMDHLDSENELEISVSFSSLYTVNIDGNFLYIILGKTKSGSSILALSASNQSLITVPKDWAIPASQATPEYLECAMAYLLAKQILNKGSSSVLLHEPSFALSQAVESIAKADGKSISNIASTKSTTSIQNCIKVHPTLSKRAIRDLLPASIQSFVDISGTGKHVKDALTKLTSIIEIDGFLGVTPAKSSSSVDPSTVLADVVAYADSTKTKDIEGRFLLNAGSLKHGHVSSFSPLSVVDWTSNTTLTVDVKPFSQNQIFDKNKSYLLAGLTGDLGQSICRWMVEAGARYIIIGSRSVKSGTPWQQELQRMGATVLVYTIDFTDKEAVTRLREEAIKTMPPIAGVMNGCMVLDDKPFSDMPFETLERVIRPKVLSTINIDAVFGLELDFFVLFSSLAAVNGIPGQSNYAAANMYMASLAEQRRKRGGVASVIHIGMILGVGYVERSGRFTESALRSYNYLTIPEHEFLQVLSEAVQSGHPASNRCPEIIIGMVAPLTGEERDKPRWHANPRFAFVMNDFTNEESDSQGEVEVPTKEQLAKAQTKDEVLGVMQKCFAKQLELILQADSGSIDESAPLTQLGIDSLIAVEIRSWFLKEAGVSLPVLKILGGAAAKDLCELACEEYKVTE.

Residues 5–438 (NEPIAVIGTG…GTNAHAILES (434 aa)) enclose the Ketosynthase family 3 (KS3) domain. Active-site for beta-ketoacyl synthase activity residues include C178, H317, and H360. The malonyl-CoA:ACP transacylase (MAT) domain stretch occupies residues 549–864 (VFTGQGAQWP…PYTGVLSRGD (316 aa)). An N-terminal hotdog fold region spans residues 938 to 1073 (HELLGVRCAD…GRIKMTLGTP (136 aa)). The interval 938–1244 (HELLGVRCAD…QMQSFTAARP (307 aa)) is dehydratase (DH) domain. One can recognise a PKS/mFAS DH domain in the interval 938 to 1245 (HELLGVRCAD…MQSFTAARPS (308 aa)). The active-site Proton acceptor; for dehydratase activity is the H970. A C-terminal hotdog fold region spans residues 1088–1245 (LGPLNVDRFY…MQSFTAARPS (158 aa)). D1145 (proton donor; for dehydratase activity) is an active-site residue. The methyltransferase (MT) domain stretch occupies residues 1399–1586 (NKFVTAAMKK…VNDFKDKSRY (188 aa)). The tract at residues 2098-2266 (SYLLAGLTGD…KRGGVASVIH (169 aa)) is ketoreductase (KR) domain. Residues 2378–2456 (DEVLGVMQKC…DLCELACEEY (79 aa)) form the Carrier domain. S2416 carries the O-(pantetheine 4'-phosphoryl)serine modification.

It functions in the pathway polyketide biosynthesis. In terms of biological role, reducing polyketide synthase; part of the gene cluster A that mediates the biosynthesis of botcinic acid and its botcinin derivatives, acetate-derived polyketides that contribute to virulence when combined with the sesquiterpene botrydial. Botcinic acid and its derivatives have been shown to induce chlorosis and necrosis during host plant infection, but also have antifungal activities. Two polyketide synthases, BOA6 and BOA9, are involved in the biosynthesis of botcinins. BOA6 mediates the formation of the per-methylated tetraketide core by condensation of four units of malonyl-CoA with one unit of acetyl-CoA, which would be methylated in activated methylene groups to yield a bicyclic acid intermediate that could then either be converted to botrylactone derivatives or lose the starter acetate unit through a retro-Claisen type C-C bond cleavage to yield botcinin derivatives. The second polyketide synthase, BOA9, is probably required for the biosynthesis of the tetraketide side chain of botcinins. The methyltransferase (MT) domain within BOA6 is probably responsible for the incorporation of four methyl groups. The trans-enoyl reductase BOA5 might take over the enoyl reductase function of BOA6 that misses an ER domain. The monooxygenases BOA2, BOA3 and BOA4 might be involved in further hydroxylations at C4, C5 and C8, whereas BOA7, close to BOA9, could potentially be involved in the hydroxylation at C4 in the side chain of botcinins. This Botryotinia fuckeliana (strain B05.10) (Noble rot fungus) protein is Reducing polyketide synthase BOA6.